The primary structure comprises 130 residues: Small ribosomal subunit protein uS8 (130 aa).

This sequence belongs to the universal ribosomal protein uS8 family. As to quaternary structure, part of the 30S ribosomal subunit. Contacts proteins S5 and S12.

One of the primary rRNA binding proteins, it binds directly to 16S rRNA central domain where it helps coordinate assembly of the platform of the 30S subunit. The sequence is that of Small ribosomal subunit protein uS8 from Ruegeria pomeroyi (strain ATCC 700808 / DSM 15171 / DSS-3) (Silicibacter pomeroyi).